The following is a 326-amino-acid chain: uncharacterized protein (326 aa).

Solcar repeat units follow at residues 15–106, 114–215, and 234–322; these read EFLV…VRRV, ETHA…ATDF, and LKTW…SKAL. 6 helical membrane passes run 16–36, 83–103, 120–140, 191–211, 240–260, and 294–314; these read FLVK…SVVA, TATL…YEQV, FLSG…LELI, FSVT…AYDL, LLCG…FEVC, and FFVG…TSFF.

It belongs to the mitochondrial carrier (TC 2.A.29) family.

Its subcellular location is the mitochondrion inner membrane. This is an uncharacterized protein from Schizosaccharomyces pombe (strain 972 / ATCC 24843) (Fission yeast).